The chain runs to 346 residues: Elongation factor Ts (346 aa).

The tract at residues 80 to 83 (TDFV) is involved in Mg(2+) ion dislocation from EF-Tu.

The protein belongs to the EF-Ts family.

The protein resides in the cytoplasm. Functionally, associates with the EF-Tu.GDP complex and induces the exchange of GDP to GTP. It remains bound to the aminoacyl-tRNA.EF-Tu.GTP complex up to the GTP hydrolysis stage on the ribosome. This is Elongation factor Ts from Streptococcus pyogenes serotype M3 (strain ATCC BAA-595 / MGAS315).